We begin with the raw amino-acid sequence, 77 residues long: Large ribosomal subunit protein bL28 (77 aa).

This sequence belongs to the bacterial ribosomal protein bL28 family.

The chain is Large ribosomal subunit protein bL28 from Leptothrix cholodnii (strain ATCC 51168 / LMG 8142 / SP-6) (Leptothrix discophora (strain SP-6)).